Reading from the N-terminus, the 338-residue chain is Biotin synthase (338 aa).

One can recognise a Radical SAM core domain in the interval 45–272 (DEVQMSTLLS…QSVVRLSAGR (228 aa)). [4Fe-4S] cluster contacts are provided by Cys-60, Cys-64, and Cys-67. The [2Fe-2S] cluster site is built by Cys-104, Cys-135, Cys-195, and Arg-267.

This sequence belongs to the radical SAM superfamily. Biotin synthase family. In terms of assembly, homodimer. The cofactor is [4Fe-4S] cluster. [2Fe-2S] cluster serves as cofactor.

The catalysed reaction is (4R,5S)-dethiobiotin + (sulfur carrier)-SH + 2 reduced [2Fe-2S]-[ferredoxin] + 2 S-adenosyl-L-methionine = (sulfur carrier)-H + biotin + 2 5'-deoxyadenosine + 2 L-methionine + 2 oxidized [2Fe-2S]-[ferredoxin]. It functions in the pathway cofactor biosynthesis; biotin biosynthesis; biotin from 7,8-diaminononanoate: step 2/2. Its function is as follows. Catalyzes the conversion of dethiobiotin (DTB) to biotin by the insertion of a sulfur atom into dethiobiotin via a radical-based mechanism. The chain is Biotin synthase from Parvibaculum lavamentivorans (strain DS-1 / DSM 13023 / NCIMB 13966).